Here is a 135-residue protein sequence, read N- to C-terminus: Galectin-1 (135 aa).

Alanine 2 carries the N-acetylalanine modification. Residues 4–135 form the Galectin domain; that stretch reads GLVASNLNLK…DFKIKCVAFE (132 aa). Lysine 13, lysine 19, and lysine 29 each carry N6-acetyllysine. Residue serine 30 is modified to Phosphoserine. Residues 45 to 49, histidine 53, asparagine 62, and 69 to 72 contribute to the a beta-D-galactoside site; these read HFNPR and WGTE. Lysine 108 carries the N6-acetyllysine; alternate modification. Residue lysine 108 is modified to N6-succinyllysine; alternate. Lysine 128 carries the N6-acetyllysine modification.

As to quaternary structure, homodimer. Binds LGALS3BP. Interacts with CD2, CD3, CD4, CD6, CD7, CD43, ALCAM and CD45. Interacts with laminin (via poly-N-acetyllactosamine). Interacts with SUSD2. Interacts with cargo receptor TMED10; the interaction mediates the translocation from the cytoplasm into the ERGIC (endoplasmic reticulum-Golgi intermediate compartment) and thereby secretion. Interacts with CD69.

It localises to the secreted. The protein resides in the extracellular space. The protein localises to the extracellular matrix. Its subcellular location is the cytoplasm. Lectin that binds beta-galactoside and a wide array of complex carbohydrates. Plays a role in regulating apoptosis, cell proliferation and cell differentiation. Inhibits CD45 protein phosphatase activity and therefore the dephosphorylation of Lyn kinase. Strong inducer of T-cell apoptosis. Plays a negative role in Th17 cell differentiation via activation of the receptor CD69. This Rattus norvegicus (Rat) protein is Galectin-1 (Lgals1).